Here is a 137-residue protein sequence, read N- to C-terminus: Fluoride-specific ion channel FluC 1 (137 aa).

The next 4 helical transmembrane spans lie at 3 to 23, 42 to 62, 69 to 89, and 107 to 127; these read PLVV…RLVL, INVT…GHGL, ILGT…YEAV, and MMFL…LAVA. Na(+) is bound by residues glycine 76 and threonine 79.

Belongs to the fluoride channel Fluc/FEX (TC 1.A.43) family.

The protein resides in the cell membrane. It carries out the reaction fluoride(in) = fluoride(out). Its activity is regulated as follows. Na(+) is not transported, but it plays an essential structural role and its presence is essential for fluoride channel function. Functionally, fluoride-specific ion channel. Important for reducing fluoride concentration in the cell, thus reducing its toxicity. This is Fluoride-specific ion channel FluC 1 from Leifsonia xyli subsp. xyli (strain CTCB07).